The primary structure comprises 164 residues: Peptidyl-prolyl cis-trans isomerase A-like 4C (164 aa).

Positions 7 to 163 (FFDITVDGKP…KKITIADCGQ (157 aa)) constitute a PPIase cyclophilin-type domain.

It belongs to the cyclophilin-type PPIase family. PPIase A subfamily.

The protein resides in the cytoplasm. The enzyme catalyses [protein]-peptidylproline (omega=180) = [protein]-peptidylproline (omega=0). Functionally, PPIases accelerate the folding of proteins. It catalyzes the cis-trans isomerization of proline imidic peptide bonds in oligopeptides. The chain is Peptidyl-prolyl cis-trans isomerase A-like 4C from Homo sapiens (Human).